The chain runs to 120 residues: NAD(P)H-quinone oxidoreductase subunit 3, chloroplastic (120 aa).

Transmembrane regions (helical) follow at residues 10-30 (FWAFLIISSLIPILAFFISGV), 64-84 (MFALVFVVFDVETVFLYPWAM), and 88-108 (VLGVSVFIEAFIFVLILIGGL).

Belongs to the complex I subunit 3 family. NDH is composed of at least 16 different subunits, 5 of which are encoded in the nucleus.

The protein resides in the plastid. Its subcellular location is the chloroplast thylakoid membrane. It carries out the reaction a plastoquinone + NADH + (n+1) H(+)(in) = a plastoquinol + NAD(+) + n H(+)(out). The enzyme catalyses a plastoquinone + NADPH + (n+1) H(+)(in) = a plastoquinol + NADP(+) + n H(+)(out). Functionally, NDH shuttles electrons from NAD(P)H:plastoquinone, via FMN and iron-sulfur (Fe-S) centers, to quinones in the photosynthetic chain and possibly in a chloroplast respiratory chain. The immediate electron acceptor for the enzyme in this species is believed to be plastoquinone. Couples the redox reaction to proton translocation, and thus conserves the redox energy in a proton gradient. The protein is NAD(P)H-quinone oxidoreductase subunit 3, chloroplastic of Ipomoea purpurea (Common morning glory).